Reading from the N-terminus, the 86-residue chain is Signal recognition particle 9 kDa protein (86 aa).

This sequence belongs to the SRP9 family. In terms of assembly, heterodimer with SRP14; binds RNA as heterodimer. Component of a signal recognition particle complex that consists of a 7SL RNA molecule of 300 nucleotides and six protein subunits: SRP72, SRP68, SRP54, SRP19, SRP14 and SRP9.

It localises to the cytoplasm. In terms of biological role, component of the signal recognition particle (SRP) complex, a ribonucleoprotein complex that mediates the cotranslational targeting of secretory and membrane proteins to the endoplasmic reticulum (ER). SRP9 together with SRP14 and the Alu portion of the SRP RNA, constitutes the elongation arrest domain of SRP. The complex of SRP9 and SRP14 is required for SRP RNA binding. In Mus musculus (Mouse), this protein is Signal recognition particle 9 kDa protein (Srp9).